We begin with the raw amino-acid sequence, 92 residues long: Small ribosomal subunit protein uS19c (92 aa).

The protein belongs to the universal ribosomal protein uS19 family.

The protein resides in the plastid. It localises to the chloroplast. Protein S19 forms a complex with S13 that binds strongly to the 16S ribosomal RNA. This chain is Small ribosomal subunit protein uS19c, found in Cyanidium caldarium (Red alga).